The primary structure comprises 291 residues: Undecaprenyl-diphosphatase (291 aa).

8 consecutive transmembrane segments (helical) span residues methionine 1–phenylalanine 21, serine 48–phenylalanine 68, leucine 102–isoleucine 122, leucine 126–alanine 146, isoleucine 162–phenylalanine 182, serine 203–leucine 223, isoleucine 231–alanine 251, and phenylalanine 267–isoleucine 287.

This sequence belongs to the UppP family.

It localises to the cell membrane. It carries out the reaction di-trans,octa-cis-undecaprenyl diphosphate + H2O = di-trans,octa-cis-undecaprenyl phosphate + phosphate + H(+). Catalyzes the dephosphorylation of undecaprenyl diphosphate (UPP). Confers resistance to bacitracin. This Staphylococcus aureus (strain Mu3 / ATCC 700698) protein is Undecaprenyl-diphosphatase.